Reading from the N-terminus, the 430-residue chain is UDP-N-acetylglucosamine 1-carboxyvinyltransferase (430 aa).

22–23 (KN) provides a ligand contact to phosphoenolpyruvate. Arg102 is a binding site for UDP-N-acetyl-alpha-D-glucosamine. Cys126 functions as the Proton donor in the catalytic mechanism. Cys126 is subject to 2-(S-cysteinyl)pyruvic acid O-phosphothioketal. UDP-N-acetyl-alpha-D-glucosamine contacts are provided by residues 131 to 135 (RPVDL), 172 to 175 (KVSV), Asp317, and Ile339.

Belongs to the EPSP synthase family. MurA subfamily.

The protein localises to the cytoplasm. The catalysed reaction is phosphoenolpyruvate + UDP-N-acetyl-alpha-D-glucosamine = UDP-N-acetyl-3-O-(1-carboxyvinyl)-alpha-D-glucosamine + phosphate. It functions in the pathway cell wall biogenesis; peptidoglycan biosynthesis. In terms of biological role, cell wall formation. Adds enolpyruvyl to UDP-N-acetylglucosamine. In Rhizobium johnstonii (strain DSM 114642 / LMG 32736 / 3841) (Rhizobium leguminosarum bv. viciae), this protein is UDP-N-acetylglucosamine 1-carboxyvinyltransferase.